Reading from the N-terminus, the 287-residue chain is Bifunctional protein FolD (287 aa).

NADP(+) is bound by residues 166-168 and Ile232; that span reads GAS.

The protein belongs to the tetrahydrofolate dehydrogenase/cyclohydrolase family. In terms of assembly, homodimer.

It catalyses the reaction (6R)-5,10-methylene-5,6,7,8-tetrahydrofolate + NADP(+) = (6R)-5,10-methenyltetrahydrofolate + NADPH. It carries out the reaction (6R)-5,10-methenyltetrahydrofolate + H2O = (6R)-10-formyltetrahydrofolate + H(+). It participates in one-carbon metabolism; tetrahydrofolate interconversion. Catalyzes the oxidation of 5,10-methylenetetrahydrofolate to 5,10-methenyltetrahydrofolate and then the hydrolysis of 5,10-methenyltetrahydrofolate to 10-formyltetrahydrofolate. The chain is Bifunctional protein FolD from Buchnera aphidicola subsp. Baizongia pistaciae (strain Bp).